The primary structure comprises 988 residues: MTTEVGSASEVKKGSDQAGADASKEKAKEVENEQTPVSEPEEEKGSQPGPPVERQSTPRLRKRGKDPSENRGISRFIPPWLKKQRSYNLVVAKDGGDKKEPTQADVEDQILGKEESLPEEESRAKGDAEEMAQRKHLEVQVEVREAKPALKSSVETQPAEEVRKDKEETIQDTQEEKLEGGAAKRETKEVQTSELKAEVASQKATKKTKTVLAKVTLLDGTEYSCDLEKRAKGQVLFDRVCEHLNLLEKDYFGLLFQDHPEQKNWLDPAKEIKRQLKNLPWLFTFNVKFYPPDPSQLTEDITRYFLCLQLRQDIASGRLPCSFVTHALLGSYTLQAEHGDYDPEEYDSIDLGDFQFAPAHTKELEEKVSELHKTHRGLSPAQADSQFLENAKRLSMYGVDLHHAKDSEGVDIKLGVCANGLLIYKDRLRINRFAWPKILKISYKRSNFYIKVRPAELEQFESTIGFKLPNHRAAKRLWKVCVEHHTFYRLVSPEQPPKTKFLTLGSKFRYSGRTQAQTREASTLIDRPAPQFERASSKRVSRSLDGAPIGVVDQSPPGEGSVPGPGVISYTTIQDGRRDSKSPTKATPLPAEGKKNTLRVDGDNIYVRHSNLMLEDLDKAQEAILKHQASISELKRNFMASTPEPRPSEWEKRRVTPLPFQPQASSHETLNVVEEKKRAEVGKDESVITEEMNGKEMSPGHGPGETRKVEPVAHKDSTSLSSESSSSSSESEEDVGEYQPHHRVTEGTIREEQEECDEELEEEPGQGAKVVEREAAVPDAVPDRQAGASVLPVETEAQEHVVAQKLPGEKGAHGGTAEQDPREEAEEDPHRVNGEVPHLDLDGLPEIICCSEPPVVKTEMVTISDASQRTEISTKEVPIVQTETKTITYESPQIDGGAGGDSGVLLTAQTITSESASTTTTTHITKTVKGGISETRIEKRIVITGDAALDHDQALAQAIREAREQHPDMSVTRVVVHKETELAEEGEE.

Residues 1-190 (MTTEVGSASE…GAAKRETKEV (190 aa)) are disordered. Threonine 2 is subject to N-acetylthreonine. Serine 7 carries the phosphoserine modification. Basic and acidic residues predominate over residues 22-31 (ASKEKAKEVE). A phosphoserine mark is found at serine 38, serine 86, and serine 116. Composition is skewed to basic and acidic residues over residues 110–148 (ILGK…EAKP) and 160–190 (EEVR…TKEV). Phosphoserine occurs at positions 201, 379, 395, 492, 543, 555, 561, and 582. The 282-residue stretch at 211–492 (VLAKVTLLDG…EHHTFYRLVS (282 aa)) folds into the FERM domain. A hydrophilic region spans residues 495 to 651 (QPPKTKFLTL…TPEPRPSEWE (157 aa)). The tract at residues 514–594 (TQAQTREAST…KATPLPAEGK (81 aa)) is disordered. The segment covering 555-567 (SPPGEGSVPGPGV) has biased composition (low complexity). A Phosphotyrosine modification is found at tyrosine 606. Serine 610 and serine 630 each carry phosphoserine. 2 disordered regions span residues 639-788 (MAST…QAGA) and 804-839 (QKLP…VPHL). The segment at 652–837 (KRRVTPLPFQ…DPHRVNGEVP (186 aa)) is spectrin--actin-binding. The span at 673–686 (VEEKKRAEVGKDES) shows a compositional bias: basic and acidic residues. Serine 698 carries the post-translational modification Phosphoserine. Over residues 704 to 717 (GETRKVEPVAHKDS) the composition is skewed to basic and acidic residues. Positions 718 to 729 (TSLSSESSSSSS) are enriched in low complexity. Basic and acidic residues predominate over residues 739–751 (QPHHRVTEGTIRE). Residue threonine 745 is modified to Phosphothreonine. Over residues 752 to 764 (EQEECDEELEEEP) the composition is skewed to acidic residues. The segment covering 828-839 (DPHRVNGEVPHL) has biased composition (basic and acidic residues). The C-terminal (CTD) stretch occupies residues 838–988 (HLDLDGLPEI…ETELAEEGEE (151 aa)).

Interacts with FCGR1A. Interacts with TRPC4. Interacts (via CTD domain) with FKBP2. Interacts with NUMA1; this interaction is negatively regulated by CDK1 during metaphase and promotes anaphase-specific localization of NUMA1 in symmetrically dividing cells. Widely expressed.

It localises to the cytoplasm. The protein localises to the cytoskeleton. Its subcellular location is the cell cortex. The protein resides in the cell membrane. In terms of biological role, required for dynein-dynactin complex and NUMA1 recruitment at the mitotic cell cortex during anaphase. The polypeptide is Band 4.1-like protein 2 (Mus musculus (Mouse)).